The chain runs to 410 residues: Arginine deiminase (410 aa).

Residue Cys399 is the Amidino-cysteine intermediate of the active site.

The protein belongs to the arginine deiminase family.

It localises to the cytoplasm. The enzyme catalyses L-arginine + H2O = L-citrulline + NH4(+). It functions in the pathway amino-acid degradation; L-arginine degradation via ADI pathway; carbamoyl phosphate from L-arginine: step 1/2. The sequence is that of Arginine deiminase from Listeria monocytogenes serotype 4b (strain F2365).